The chain runs to 415 residues: Packaging protein 3 (415 aa).

The tract at residues 1–55 (MHPVLRQMRPPPQQRQEQEQRQTCRAPSPPPTASGGATSAVDAAADGDYEPPRRR) is disordered. Residues 1-173 (MHPVLRQMRP…VNQEINFQKS (173 aa)) are interaction with packaging protein 1. Phosphoserine; by host occurs at positions 75 and 360. Residues 381 to 394 (GAGPGLAVAPARAG) are compositionally biased toward low complexity. The interval 381 to 415 (GAGPGLAVAPARAGNVGGVEEYDEDDEYEPEDGEY) is disordered. The segment covering 400–415 (EEYDEDDEYEPEDGEY) has biased composition (acidic residues).

It belongs to the adenoviridae packaging protein 3 family. As to quaternary structure, part of the genome packaging complex composed of packaging proteins 1, 2 and 3; this complex specifically binds to the packaging sequence on the left end of viral genomic DNA and performs packaging of the viral genome. Interacts with hexon-linking protein IIIa; this interaction is required to promote correct genome packaging. Cleaved at different sites by the viral protease during virion maturation.

It is found in the host nucleus. Involved in viral genome packaging through its interaction with packaging proteins 1 and 2. After proteolytic cleavage by adenovirus protease, L1 52/55k protein is removed from the capsid during viral maturation. This chain is Packaging protein 3, found in Homo sapiens (Human).